The following is a 341-amino-acid chain: UDP-3-O-acylglucosamine N-acyltransferase (341 aa).

The active-site Proton acceptor is the H239.

This sequence belongs to the transferase hexapeptide repeat family. LpxD subfamily. Homotrimer.

The enzyme catalyses a UDP-3-O-[(3R)-3-hydroxyacyl]-alpha-D-glucosamine + a (3R)-hydroxyacyl-[ACP] = a UDP-2-N,3-O-bis[(3R)-3-hydroxyacyl]-alpha-D-glucosamine + holo-[ACP] + H(+). It functions in the pathway bacterial outer membrane biogenesis; LPS lipid A biosynthesis. Its function is as follows. Catalyzes the N-acylation of UDP-3-O-acylglucosamine using 3-hydroxyacyl-ACP as the acyl donor. Is involved in the biosynthesis of lipid A, a phosphorylated glycolipid that anchors the lipopolysaccharide to the outer membrane of the cell. This Photobacterium profundum (strain SS9) protein is UDP-3-O-acylglucosamine N-acyltransferase.